The sequence spans 430 residues: Solanesyl-diphosphate synthase 1, mitochondrial (430 aa).

The transit peptide at 1 to 31 (MSWRWALARRVAALGATSGGGDGATAQAQRL) directs the protein to the mitochondrion. Positions 133, 136, and 182 each coordinate isopentenyl diphosphate. Residues D189 and D193 each coordinate Mg(2+). R198 is an an all-trans-polyprenyl diphosphate binding site. R199 serves as a coordination point for isopentenyl diphosphate. Residues K275, T276, Q313, and K330 each coordinate an all-trans-polyprenyl diphosphate.

It belongs to the FPP/GGPP synthase family. In terms of assembly, homodimer. The cofactor is Mg(2+). Expressed in leaves, stems and roots. Highest expression in roots.

It is found in the mitochondrion. It carries out the reaction 7 isopentenyl diphosphate + (2E)-geranyl diphosphate = all-trans-nonaprenyl diphosphate + 7 diphosphate. It participates in cofactor biosynthesis; ubiquinone biosynthesis. Functionally, involved in the supply of solanesyl diphosphate for ubiquinone-9 (UQ-9) biosynthesis in mitochondria. Farnesyl diphosphate is the preferred substrate. In Oryza sativa subsp. japonica (Rice), this protein is Solanesyl-diphosphate synthase 1, mitochondrial.